The following is an 85-amino-acid chain: LYR motif-containing protein 5A (85 aa).

It belongs to the complex I LYR family.

The sequence is that of LYR motif-containing protein 5A (lyrm5a) from Danio rerio (Zebrafish).